The chain runs to 155 residues: Small ribosomal subunit protein uS9 (155 aa).

The protein belongs to the universal ribosomal protein uS9 family.

The protein is Small ribosomal subunit protein uS9 of Rhizobium leguminosarum bv. trifolii (strain WSM2304).